The following is a 1165-amino-acid chain: MHLKCLEIERFKSFGPYTRIPLLEGFTVVSGPNGSGKSNIIDALLFALGLSTSRGMRAEKLSDLIHQGAAKGEVAVTVTFALDAAAGGGELTVCRRLKVNGPNSTSSYQLNGSPCTLTDLHEELARHHIYPEGYNVVLQGDVTGIIAMPARERREIIDELAGVAEFDRKIEAARRELGEVEVRSDRIQAVVSELLEQMERLQKERAKAEEYRKLRAELGELALWEHLLSVRSLEAQIAQITSQLAAAEAVLAGFDREAEALAERCEQALDELDTANTRVKAMGENEQVALRTQMASVQAQRAQAEAALADLAQQQRQAQGRQQQLELELGELALTLTGFSRRQQDQQALVAQWTARLESDRQVLETSRNDLEQLSASSRRWVEEQSQLRRRLDQLQSEHDPLQRTLDRLGDRLVQATGEGERHREELARIEAGHAQLATEAKVAQERLAAARTRLEQTRADLEAERAQILADRTTQRRLEKERTEKARELDRLETQRQVWREAEGSRATQEVLGSGIQGVHGLISQLGRVEAQYQGALEVAAGNRLNNVVVEDDAVAAQAIELLKSRRAGRATFLPLNKLRSGRYLERLHEEGAIGYALDLIEFDRRYEAAFVQVFGDTVVFRSLELARRQLGRYRMVTMAGELLEKSGAMTGGSLDARRGGSGFALSEPPELAEMRARLGDLDRLLATLAERLERREQRAHELQSAAEAAQRELVAIENRAEQLGREHSTQQARATQLRVFLDSCQVGLEADRQEQADLAARLGPLREQIVQVREELAKLEQSDNHHRWQQSQQHLRELETEVRRWELQLRHAEADLQKSHLDEQLAQEKRQNLLSRRLDWEDQKVEFGQREEESRTRLAEFDRVIAELAAQVAELEERLVDIKRERDRLEAHGRALQQRQGQLNLQREQERLHQGQRAAALAAAQERLDELGPPAEDVPPPPEDLSLEQLQATRLRKQRRLEALEPVNMLAIEEYDRTAERQGELSEKLATLQRERSELLLRIEDCDTLKRSAFMQAFDAVNTHFQSLFAELSDGDGHLALEDPDNPFAGGLTLVAHPRGKQVRRLEAMSGGEKSLTALSFIFALQRYRPSPFYAFDEVDMFLDGANVERLAKMVRQQANSTQFLVVSLRRPMIERADRAIGVTLARAGHSQVLGVKLAADAS.

32 to 39 (PNGSGKSN) is an ATP binding site. Positions 161–503 (AGVAEFDRKI…ETQRQVWREA (343 aa)) form a coiled coil. Positions 518–630 (QGVHGLISQL…VFRSLELARR (113 aa)) constitute an SMC hinge domain. Coiled coils occupy residues 672–901 (ELAE…LQQR) and 946–1010 (DLSL…DCDT).

The protein belongs to the SMC family. In terms of assembly, homodimer.

It localises to the cytoplasm. In terms of biological role, required for chromosome condensation and partitioning. This Gloeobacter violaceus (strain ATCC 29082 / PCC 7421) protein is Chromosome partition protein Smc.